Reading from the N-terminus, the 405-residue chain is Serpin I2 (405 aa).

The signal sequence occupies residues 1 to 18 (MDTIFLWSLLLLFFGSQA). N-linked (GlcNAc...) asparagine glycosylation is found at Asn-202, Asn-207, and Asn-306.

The protein belongs to the serpin family. As to expression, expressed in pancreas and adipose tissues.

The protein resides in the secreted. This chain is Serpin I2 (SERPINI2), found in Homo sapiens (Human).